The chain runs to 428 residues: Glutamate-1-semialdehyde 2,1-aminomutase (428 aa).

An N6-(pyridoxal phosphate)lysine modification is found at lysine 265.

Belongs to the class-III pyridoxal-phosphate-dependent aminotransferase family. HemL subfamily. As to quaternary structure, homodimer. The cofactor is pyridoxal 5'-phosphate.

It localises to the cytoplasm. The catalysed reaction is (S)-4-amino-5-oxopentanoate = 5-aminolevulinate. It participates in porphyrin-containing compound metabolism; protoporphyrin-IX biosynthesis; 5-aminolevulinate from L-glutamyl-tRNA(Glu): step 2/2. In Methylobacillus flagellatus (strain ATCC 51484 / DSM 6875 / VKM B-1610 / KT), this protein is Glutamate-1-semialdehyde 2,1-aminomutase.